The sequence spans 547 residues: Putative HMP/thiamine import ATP-binding protein YkoD (547 aa).

ABC transporter domains lie at 8–250 (LTVE…KLGI) and 295–523 (LEVS…KAKL). Residues 42–49 (GPSGCGKS) and 327–334 (GPNGTGKS) contribute to the ATP site.

This sequence belongs to the ABC transporter superfamily. As to quaternary structure, the complex is composed of two ATP-binding proteins (YkoD), two transmembrane proteins (YkoC and YkoE) and a solute-binding protein (YkoF).

It localises to the cell membrane. Part of the ABC transporter complex YkoCDEF that could transport hydroxymethylpyrimidine (HMP) and/or thiamine. Could also transport other HMP-containing products. Responsible for energy coupling to the transport system. In Bacillus subtilis (strain 168), this protein is Putative HMP/thiamine import ATP-binding protein YkoD (ykoD).